Consider the following 468-residue polypeptide: Ribulose bisphosphate carboxylase large chain (468 aa).

Lysine 5 is modified (N6,N6,N6-trimethyllysine). Residues asparagine 114 and threonine 164 each contribute to the substrate site. Residue lysine 166 is the Proton acceptor of the active site. A substrate-binding site is contributed by lysine 168. Residues lysine 192, aspartate 194, and glutamate 195 each contribute to the Mg(2+) site. Lysine 192 bears the N6-carboxylysine mark. Catalysis depends on histidine 285, which acts as the Proton acceptor. Residues arginine 286, histidine 318, and serine 370 each coordinate substrate.

Belongs to the RuBisCO large chain family. Type I subfamily. In terms of assembly, heterohexadecamer of 8 large chains and 8 small chains; disulfide-linked. The disulfide link is formed within the large subunit homodimers. Requires Mg(2+) as cofactor. In terms of processing, the disulfide bond which can form in the large chain dimeric partners within the hexadecamer appears to be associated with oxidative stress and protein turnover.

The protein localises to the plastid. Its subcellular location is the chloroplast. It catalyses the reaction 2 (2R)-3-phosphoglycerate + 2 H(+) = D-ribulose 1,5-bisphosphate + CO2 + H2O. The catalysed reaction is D-ribulose 1,5-bisphosphate + O2 = 2-phosphoglycolate + (2R)-3-phosphoglycerate + 2 H(+). Functionally, ruBisCO catalyzes two reactions: the carboxylation of D-ribulose 1,5-bisphosphate, the primary event in carbon dioxide fixation, as well as the oxidative fragmentation of the pentose substrate in the photorespiration process. Both reactions occur simultaneously and in competition at the same active site. The polypeptide is Ribulose bisphosphate carboxylase large chain (Solandra grandiflora (Chalice vine)).